The primary structure comprises 471 residues: 7-dehydrocholesterol reductase (471 aa).

Transmembrane regions (helical) follow at residues 36 to 56, 95 to 115, 144 to 164, 173 to 193, 233 to 253, 262 to 282, 302 to 322, and 327 to 347; these read LVSVIFLLLFAPFIVYYFIMA, LYALWVSFQVLLYSWLPDFCH, LQAWLITHFLWFVNAYLLSWF, WIPLLWCANILGYAVSTFAMI, LFFNGRPGIVAWTLINLSFAA, VTNSMILVNVLQAIYVLDFFW, LGWGDCVWLPYLYTLQGLYLV, and QLSTPNALGVLLLGLVGYYIF. NADP(+) contacts are provided by residues K354, R358, L391, W396, and 403 to 404; that span reads NY. A helical membrane pass occupies residues 416–436; it reads LACGGGHLLPYFYIIYMTILL. NADP(+)-binding positions include D443, 447 to 451, and Y458; that span reads CANKY.

The protein belongs to the ERG4/ERG24 family. As to quaternary structure, interacts with DHCR24; this interaction regulates DHCR7 activity. Interacts with TMEM147. In terms of tissue distribution, highest expression is detected in liver, followed by kidney and brain.

It localises to the endoplasmic reticulum membrane. The enzyme catalyses cholesterol + NADP(+) = 7-dehydrocholesterol + NADPH + H(+). The catalysed reaction is 7-dehydrodesmosterol + NADPH + H(+) = desmosterol + NADP(+). It carries out the reaction 5,6alpha-epoxy-5alpha-cholestan-3beta-ol + H2O = 5alpha-cholestane-3beta,5,6beta-triol. It catalyses the reaction 5,6beta-epoxy-5beta-cholestan-3beta-ol + H2O = 5alpha-cholestane-3beta,5,6beta-triol. It functions in the pathway steroid biosynthesis; cholesterol biosynthesis. Oxidoreductase that catalyzes the last step of the cholesterol synthesis pathway, which transforms cholesta-5,7-dien-3beta-ol (7-dehydrocholesterol,7-DHC) into cholesterol by reducing the C7-C8 double bond of its sterol core. Can also metabolize cholesta-5,7,24-trien-3beta-ol (7-dehydrodemosterol, 7-DHD) to desmosterol, which is then metabolized by the Delta(24)-sterol reductase (DHCR24) to cholesterol. Modulates ferroptosis (a form of regulated cell death driven by iron-dependent lipid peroxidation) through the metabolic breakdown of the anti-ferroptotic metabolites 7-DHC and 7-DHD which, when accumulated, divert the propagation of peroxyl radical-mediated damage from phospholipid components to its sterol core, protecting plasma and mitochondrial membranes from phospholipid autoxidation. Its function is as follows. Component of the microsomal antiestrogen binding site (AEBS), a multiproteic complex at the ER membrane that consists of an association between cholestenol Delta-isomerase/EBP and DHCR7. This complex is responsible for cholesterol-5,6-epoxide hydrolase (ChEH) activity, which consists in the hydration of cholesterol-5,6-epoxides (5,6-EC) into cholestane-3beta,5alpha,6beta-triol (CT). The precise role of each component of this complex has not been described yet. This Rattus norvegicus (Rat) protein is 7-dehydrocholesterol reductase (Dhcr7).